We begin with the raw amino-acid sequence, 155 residues long: FUN14 domain-containing protein 1 (155 aa).

Residues 1 to 47 lie on the Cytoplasmic side of the membrane; the sequence is MATRNPPPQDYESDDDSYEVLDLTEYARRHQWWNRVFGHSSGPMVEK. Ser13 is modified (phosphoserine; by CK2). Position 17 is a phosphoserine; by ULK1 (Ser17). At Tyr18 the chain carries Phosphotyrosine; by SRC. Positions 18–21 match the YXXL motif; sequence YEVL. Residues 48-68 traverse the membrane as a helical segment; that stretch reads YSVATQIVMGGVTGWCAGFLF. The Mitochondrial intermembrane segment spans residues 69 to 74; sequence QKVGKL. The helical transmembrane segment at 75–95 threads the bilayer; that stretch reads AATAVGGGFLLLQIASHSGYV. Over 96–133 the chain is Cytoplasmic; sequence QIDWKRVEKDVNKAKRQIKKRANKAAPEINNLIEEATE. Residue Lys119 forms a Glycyl lysine isopeptide (Lys-Gly) (interchain with G-Cter in ubiquitin) linkage. Residues 134-154 traverse the membrane as a helical segment; that stretch reads FIKQNIVISSGFVGGFLLGLA. Position 155 (Ser155) is a topological domain, mitochondrial intermembrane.

The protein belongs to the FUN14 family. As to quaternary structure, interacts (via YXXL motif) with MAP1 LC3 family proteins MAP1LC3A, MAP1LC3B and GABARAP. Interacts with DNM1L/DPR1. Interacts with GPX4. Phosphorylation at Ser-13 by CK2 and at Tyr-18 by SRC inhibits activation of mitophagy. Following hypoxia, dephosphorylated at Tyr-18, leading to interaction with MAP1 LC3 family proteins and triggering mitophagy. Dephosphorylation is mediated by PGAM5. Phosphorylated by ULK1 at Ser-17 which enhances FUNDC1 binding to LC3. Post-translationally, ubiquitinated on Lys-119. Deubiquitinated by USP19; leading to hypoxia-induced DRP1 oligomerization and GTPase activity. Widely expressed.

It is found in the mitochondrion outer membrane. Functionally, integral mitochondrial outer-membrane protein that mediates the formation of mitochondria-associated endoplasmic reticulum membranes (MAMs). In turn, mediates angiogenesis and neoangiogenesis through interference with intracellular Ca(2+) communication and regulation of the vascular endothelial growth factor receptor KDR/VEGFR2 expression at both mRNA and protein levels. Also acts as an activator of hypoxia-induced mitophagy, an important mechanism for mitochondrial quality and homeostasis, by interacting with and recruiting LC3 protein family to mitochondria. Mechanistically, recruits DRP1 at ER-mitochondria contact sites leading to DRP1 oligomerization and GTPase activity to facilitate mitochondrial fission during hypoxia. Additionally, plays a role in hepatic ferroptosis by interacting directly with glutathione peroxidase/GPX4 to facilitate its recruitment into mitochondria through TOM/TIM complex where it is degraded by mitophagy. This is FUN14 domain-containing protein 1 (FUNDC1) from Homo sapiens (Human).